A 75-amino-acid chain; its full sequence is UPF0352 protein ETA_12580 (75 aa).

The protein belongs to the UPF0352 family.

In Erwinia tasmaniensis (strain DSM 17950 / CFBP 7177 / CIP 109463 / NCPPB 4357 / Et1/99), this protein is UPF0352 protein ETA_12580.